The sequence spans 1233 residues: NACHT, LRR and PYD domains-containing protein 1b allele 1 (1233 aa).

The segment at 1-22 (MEESPPKQKSNTKVAQHEGQQD) is disordered. Positions 126 to 435 (QLVIIEGAAG…EFFAAISCIL (310 aa)) constitute an NACHT domain. Position 132-139 (132-139 (GAAGIGKS)) interacts with ATP. LRR repeat units lie at residues 627-647 (NLEG…QSLC) and 684-704 (SLTE…RMLC). The segment at 850–983 (FWGPIGPVAT…GYTVLKNPSF (134 aa)) is ZU5. The 284-residue stretch at 850–1133 (FWGPIGPVAT…LRPALPRIAQ (284 aa)) folds into the FIIND domain. The segment at 984–1133 (SPMGVVLRII…LRPALPRIAQ (150 aa)) is UPA. The region spanning 1143 to 1226 (HFMDQHREQL…HLVMDLLEKS (84 aa)) is the CARD domain.

Belongs to the NLRP family. Interacts with DPP9; leading to inhibit activation of the inflammasome. DPP9 acts via formation of a ternary complex, composed of a DPP9 homodimer, one full-length Nlrp1b protein, and one cleaved C-terminus of Nlrp1b (NACHT, LRR and PYD domains-containing protein 1b, C-terminus). Interacts with DPP8; leading to inhibit activation of the inflammasome, probably via formation of a ternary complex with DPP8. Interacts (via LRR repeats) with BCL2 and BCL2L1 (via the loop between motifs BH4 and BH3). Interacts with NOD2; this interaction may increase IL1B release. Interacts with EIF2AK2/PKR; this interaction requires EIF2AK2 activity, is accompanied by EIF2AK2 autophosphorylation and promotes inflammasome assembly in response to B.anthracis lethal toxin. Interacts with MEFV; this interaction targets Nlrp1b to degradation by autophagy, hence preventing excessive IL1B- and IL18-mediated inflammation. As to quaternary structure, interacts with the C-terminal part of Nlrp1b (NACHT, LRR and PYD domains-containing protein 1b, C-terminus) in absence of pathogens and other damage-associated signals. In terms of assembly, interacts with the N-terminal part of Nlrp1b (NACHT, LRR and PYD domains-containing protein 1b, N-terminus) in absence of pathogens and other damage-associated signals. Homomultimer; forms the Nlrp1b inflammasome polymeric complex, a filament composed of homopolymers of this form in response to pathogens and other damage-associated signals. The Nlrp1b inflammasome polymeric complex directly recruits pro-caspase-1 (proCASP1) independently of PYCARD/ASC. Interacts (via CARD domain) with CASP1 (via CARD domain); leading to CASP1 activation. In terms of processing, autocatalytically cleaved. Autocatalytic cleavage in FIIND region occurs constitutively, prior to activation signals, and is required for inflammasome activity (IL1B release), possibly by facilitating CASP1 binding. Both N- and C-terminal parts remain associated non-covalently. Ubiquitinated by UBR2, a component of the N-end rule pathway in response to pathogens and other damage-associated signals, leading to its degradation by the proteasome and subsequent release of the cleaved C-terminal part of the protein (NACHT, LRR and PYD domains-containing protein 1b, C-terminus), which polymerizes and forms the Nlrp1b inflammasome. Post-translationally, (Microbial infection) Cleavage by B.anthracis lethal toxin (LT) endopeptidase promotes ubiquitination and degradation of the N-terminal part, releasing the cleaved C-terminal part of the protein (NACHT, LRR and PYD domains-containing protein 1b, C-terminus), which polymerizes and forms the Nlrp1b inflammasome. In terms of processing, (Microbial infection) Ubiquitinated by S.flexneri IpaH7.8, leading to its degradation by the proteasome and subsequent release of the cleaved C-terminal part of the protein (NACHT, LRR and PYD domains-containing protein 1b, C-terminus), which polymerizes and forms the Nlrp1b inflammasome. In terms of tissue distribution, widely expressed, including in macrophages.

The protein localises to the cytoplasm. Its subcellular location is the cytosol. It localises to the membrane. The protein resides in the inflammasome. Activated by cleavage by B.anthracis lethal toxin (LT) endopeptidase: cleavage by LT promotes ubiquitination and degradation of the N-terminal part, releasing the cleaved C-terminal part of the protein (NACHT, LRR and PYD domains-containing protein 1b, C-terminus), which polymerizes and forms the Nlrp1b inflammasome. Activated by S.flexneri IpaH7.8, an E3 ubiquitin ligase that mediates ubiquitination and degradation of the N-terminal part, releasing the cleaved C-terminal part of the protein, which polymerizes and forms the Nlrp1b inflammasome. Nlrp1b inflammasome is inhibited by DPP8 and DPP9, which sequester the C-terminal fragment of Nlrp1b (NACHT, LRR and PYD domains-containing protein 1b, C-terminus) in a ternary complex, thereby preventing Nlrp1b oligomerization and activation. Nlrp1b inflammasome is activated by Val-boroPro (Talabostat, PT-100), an inhibitor of dipeptidyl peptidases DPP8 and DPP9. Val-boroPro relieves inhibition of DPP8 and/or DPP9 by promoting disruption of the ternary complex, releasing its C-terminal part from autoinhibition. Activated by metabolic inhibitors, such as 2-deoxy-D-glucose and sodium azide, by nutrient deprivation and hypoxia, possibly due to a decrease in cytosolic ATP. Also activated by Toxoplasma gondii. Not activated by muramyl dipeptide, nor by full-length bacterial peptidoglycan. Contrary to its human ortholog, not activated by positive-strand RNA virus such as Semliki Forrest virus or long dsRNA. Its function is as follows. Acts as the sensor component of the Nlrp1b inflammasome, which mediates inflammasome activation in response to various pathogen-associated signals, leading to subsequent pyroptosis. Inflammasomes are supramolecular complexes that assemble in the cytosol in response to pathogens and other damage-associated signals and play critical roles in innate immunity and inflammation. Acts as a recognition receptor (PRR): recognizes specific pathogens and other damage-associated signals, such as B.anthracis lethal toxin (LT) or Val-boroPro inhibitor, and mediates the formation of the inflammasome polymeric complex. In response to pathogen-associated signals, the N-terminal part of Nlrp1b is degraded by the proteasome, releasing the cleaved C-terminal part of the protein (NACHT, LRR and PYD domains-containing protein 1b, C-terminus), which polymerizes to initiate the formation of the inflammasome complex: the inflammasome directly recruits pro-caspase-1 (proCASP1) independently of PYCARD/ASC and promotes caspase-1 (CASP1) activation, which subsequently cleaves and activates inflammatory cytokines IL1B and IL18 and gasdermin-D (GSDMD), leading to pyroptosis. In the absence of GSDMD expression, the Nlrp1b inflammasome is able to recruit and activate CASP8, leading to activation of gasdermin-E (GSDME). Activation of Nlrp1b inflammasome is also required for HMGB1 secretion; the active cytokines and HMGB1 stimulate inflammatory responses. Primary mediator of macrophage susceptibility to B.anthracis LT: in response to B.anthracis infection, macrophages and dendritic cells release IL1B and undergo pyroptosis. This early inflammatory response to the toxin increases resistance to infection by B.anthracis spores. Functionally, constitutes the precursor of the Nlrp1b inflammasome, which mediates autoproteolytic processing within the FIIND domain to generate the N-terminal and C-terminal parts, which are associated non-covalently in absence of pathogens and other damage-associated signals. In terms of biological role, regulatory part that prevents formation of the Nlrp1b inflammasome: in absence of pathogens and other damage-associated signals, interacts with the C-terminal part of Nlrp1b (NACHT, LRR and PYD domains-containing protein 1b, C-terminus), preventing activation of the Nlrp1b inflammasome. In response to pathogen-associated signals, this part is ubiquitinated by the N-end rule pathway and degraded by the proteasome, releasing the cleaved C-terminal part of the protein, which polymerizes and forms the Nlrp1b inflammasome. Constitutes the active part of the Nlrp1b inflammasome. In absence of pathogens and other damage-associated signals, interacts with the N-terminal part of Nlrp1b (NACHT, LRR and PYD domains-containing protein 1b, N-terminus), preventing activation of the Nlrp1b inflammasome. In response to pathogen-associated signals, the N-terminal part of Nlrp1b is degraded by the proteasome, releasing this form, which polymerizes to form the Nlrp1b inflammasome complex: the Nlrp1b inflammasome complex then directly recruits pro-caspase-1 (proCASP1) and promotes caspase-1 (CASP1) activation, leading to gasdermin-D (GSDMD) cleavage and subsequent pyroptosis. This chain is NACHT, LRR and PYD domains-containing protein 1b allele 1, found in Mus musculus (Mouse).